The following is a 153-amino-acid chain: Transthyretin (153 aa).

The first 19 residues, 1–19 (MASFKSFLLLALLAIVSEA), serve as a signal peptide directing secretion. Cysteine 34 carries the post-translational modification Sulfocysteine. Lysine 39 and glutamate 78 together coordinate L-thyroxine. Asparagine 81 is a glycosylation site (N-linked (GlcNAc...) asparagine). Serine 141 serves as a coordination point for L-thyroxine.

Belongs to the transthyretin family. Homotetramer. Dimer of dimers. In the homotetramer, subunits assemble around a central channel that can accommodate two ligand molecules. Interacts with rbp4. Sulfonation of the reactive cysteine Cys-34 enhances the stability of the native conformation of TTR, avoiding misassembly of the protein leading to amyloid formation. Detected in plasma (at protein level). Expressed during metamorphosis in tadpole liver, but not in tadpole brain nor adult liver. Between 1.5 and 3 days of development, also expressed in the mesoderm of the kidney.

It localises to the secreted. Its function is as follows. Thyroid hormone-binding protein, with a much higher binding affinity for triiodothyronine (T3) than for thyroxine (T4). Probably transports triiodothyronine from the bloodstream to the brain. This Xenopus laevis (African clawed frog) protein is Transthyretin (ttr).